A 230-amino-acid chain; its full sequence is Large ribosomal subunit protein uL1 (230 aa).

It belongs to the universal ribosomal protein uL1 family. As to quaternary structure, part of the 50S ribosomal subunit.

Its function is as follows. Binds directly to 23S rRNA. The L1 stalk is quite mobile in the ribosome, and is involved in E site tRNA release. Protein L1 is also a translational repressor protein, it controls the translation of the L11 operon by binding to its mRNA. This chain is Large ribosomal subunit protein uL1, found in Acidiphilium cryptum (strain JF-5).